A 605-amino-acid polypeptide reads, in one-letter code: Probable potassium transport system protein Kup (605 aa).

A run of 12 helical transmembrane segments spans residues 17 to 37 (GLVF…IFAL), 45 to 65 (VFGI…VEYA), 96 to 116 (IAFV…DGVI), 140 to 160 (LGTL…FQFK), 165 to 185 (VAAA…VSGL), 211 to 231 (GISA…GEAL), 246 to 266 (AWYF…AFAL), 286 to 306 (LYIP…QALI), 338 to 358 (IYIG…MLIF), 367 to 387 (AYGL…TIIF), 394 to 414 (WKVP…ISNL), and 417 to 437 (LPHG…TILI).

This sequence belongs to the HAK/KUP transporter (TC 2.A.72) family.

It localises to the cell inner membrane. It catalyses the reaction K(+)(in) + H(+)(in) = K(+)(out) + H(+)(out). Its function is as follows. Transport of potassium into the cell. Likely operates as a K(+):H(+) symporter. In Geotalea uraniireducens (strain Rf4) (Geobacter uraniireducens), this protein is Probable potassium transport system protein Kup.